Consider the following 258-residue polypeptide: Venom plasminogen activator (258 aa).

An N-terminal signal peptide occupies residues 1 to 18 (MVLIRVLANLLILQLSYA). Positions 19 to 24 (QKSSEL) are excised as a propeptide. Positions 25–249 (VVGGDECNIN…YTDWIQSIIS (225 aa)) constitute a Peptidase S1 domain. Disulfide bonds link Cys31–Cys163, Cys50–Cys66, Cys98–Cys256, Cys142–Cys210, Cys174–Cys189, and Cys200–Cys225. Asn44 is a glycosylation site (N-linked (GlcNAc...) asparagine). Catalysis depends on charge relay system residues His65 and Asp110. Ser204 acts as the Charge relay system in catalysis.

Belongs to the peptidase S1 family. Snake venom subfamily. As to quaternary structure, monomer. Expressed by the venom gland.

Its subcellular location is the secreted. In terms of biological role, snake venom serine protease that activates plasminogen. Shows a preferential cleavage at Arg-|-Xaa instead of Lys-|-Xaa bonds. The protein is Venom plasminogen activator of Agkistrodon piscivorus leucostoma (Western cottonmouth).